Consider the following 402-residue polypeptide: B3 domain-containing protein Os01g0723500 (402 aa).

The TF-B3 1 DNA-binding region spans 18-121; that stretch reads RPHFFKVLVG…RFTAMVFDRT (104 aa). The tract at residues 126–203 is disordered; that stretch reads EDLMGGGGGD…VKNEEDADEL (78 aa). Residues 152–162 are compositionally biased toward basic and acidic residues; it reads DAARPKKDSVG. Polar residues predominate over residues 173–186; that stretch reads SGGQPLQIVDSSWT. The TF-B3 2 DNA-binding region spans 289-381; it reads CVIRMSTMHV…EFRVHIFRVV (93 aa).

Its subcellular location is the nucleus. This chain is B3 domain-containing protein Os01g0723500, found in Oryza sativa subsp. japonica (Rice).